Here is a 123-residue protein sequence, read N- to C-terminus: Large ribosomal subunit protein uL29 (123 aa).

The protein belongs to the universal ribosomal protein uL29 family.

This is Large ribosomal subunit protein uL29 (RPL35) from Euphorbia esula (Leafy spurge).